A 215-amino-acid chain; its full sequence is Protein-L-isoaspartate O-methyltransferase (215 aa).

Ser62 is an active-site residue.

It belongs to the methyltransferase superfamily. L-isoaspartyl/D-aspartyl protein methyltransferase family.

Its subcellular location is the cytoplasm. It catalyses the reaction [protein]-L-isoaspartate + S-adenosyl-L-methionine = [protein]-L-isoaspartate alpha-methyl ester + S-adenosyl-L-homocysteine. Catalyzes the methyl esterification of L-isoaspartyl residues in peptides and proteins that result from spontaneous decomposition of normal L-aspartyl and L-asparaginyl residues. It plays a role in the repair and/or degradation of damaged proteins. In Bradyrhizobium sp. (strain ORS 278), this protein is Protein-L-isoaspartate O-methyltransferase.